The chain runs to 91 residues: N.vectensis toxin 8 (91 aa).

The signal sequence occupies residues 1 to 26 (MNSLLKVAVVCLVMLVACFVPRVILT). 3 cysteine pairs are disulfide-bonded: cysteine 45–cysteine 76, cysteine 47–cysteine 67, and cysteine 60–cysteine 77.

As to expression, expressed in ectodermal gland cells.

Functionally, has toxic effects on zebrafish larvae. It causes contractile paralysis and twitching of the tail within 20 minutes, followed by death within 30 minutes. Does not show any toxicity when injected into arthropods (cherry shrimps or grass shrimps). The sequence is that of N.vectensis toxin 8 from Nematostella vectensis (Starlet sea anemone).